A 649-amino-acid polypeptide reads, in one-letter code: Echinoderm microtubule-associated protein-like 2 (649 aa).

The tandem atypical propeller in EMLs stretch occupies residues 10 to 649; sequence KEVIFSMEEG…DTSVLQWRVA (640 aa). WD repeat units lie at residues 56–93, 97–144, 151–192, 195–234, 241–280, 285–323, 369–406, 410–447, 452–489, 495–535, 564–602, and 609–648; these read KLDW…LYSV, RQRH…VWDS, HVLG…VWDW, ESKV…FWSL, KRQG…VWGK, ITQE…LWGS, FSLL…LWSS, QPVW…LLDT, LVAI…VYTV, KVSR…YWDA, FGIW…LFSY, and ALSH…QWRV.

It belongs to the WD repeat EMAP family. In terms of assembly, interacts with GRID2 and may also interact with GRID1. Interacts with EML3. Binds unpolymerized tubulins via its WD repeat region. As to expression, widely expressed in both brain and peripheral tissues, including brainstem and enrichment in the postsynaptic density, PSD.

The protein resides in the cytoplasm. Its subcellular location is the cytoskeleton. It is found in the spindle. Functionally, tubulin binding protein that inhibits microtubule nucleation and growth, resulting in shorter microtubules. In Rattus norvegicus (Rat), this protein is Echinoderm microtubule-associated protein-like 2 (Eml2).